Here is a 347-residue protein sequence, read N- to C-terminus: Dual specificity mitogen-activated protein kinase kinase mek-1 (347 aa).

Positions 1-42 are disordered; it reads MERDFDLGMGRPGGLGGLGGEPIMQQMPQPAPHHPSRSSNDH. The span at 10–20 shows a compositional bias: gly residues; it reads GRPGGLGGLGG. The 254-residue stretch at 72–325 folds into the Protein kinase domain; sequence LQFVEDIGHG…YDMLLQHPFV (254 aa). ATP contacts are provided by residues 78–86 and Lys-99; that span reads IGHGSCGTV. Asp-193 serves as the catalytic Proton acceptor. Residues Ser-221 and Ser-225 each carry the phosphoserine modification.

The protein belongs to the protein kinase superfamily. STE Ser/Thr protein kinase family. MAP kinase kinase subfamily. As to quaternary structure, interacts with shc-1; the interaction is independent of mek-1 catalytic activity, is constitutive and may facilitate mlk-1-mediated phosphorylation by bringing mlk-1 and mek-1 together. It depends on Mg(2+) as a cofactor. In terms of processing, may be phosphorylated at Ser-221 and/or Ser-225 by mlk-1. Expressed in pharyngeal muscles, uterine endothelial cells, intestine and in neurons of ring ganglia, ventral ganglion and ganglia around anus. Expressed also in hypodermis and body muscles.

The catalysed reaction is L-seryl-[protein] + ATP = O-phospho-L-seryl-[protein] + ADP + H(+). The enzyme catalyses L-threonyl-[protein] + ATP = O-phospho-L-threonyl-[protein] + ADP + H(+). It catalyses the reaction L-tyrosyl-[protein] + ATP = O-phospho-L-tyrosyl-[protein] + ADP + H(+). May be activated by phosphorylation at Ser-221 and Ser-225. Dual specificity protein kinase which may phosphorylate kgb-1 and thereby is an essential component of the JNK pathway composed of mlk-1, mek-1 and kgb-1. May also have a synergistic role with sek-1 in phosphorylating pmk-1. Involved in the response to environmental stress including heavy metal ions (Cu(2+) and Cd(2+)), oxidative stress and starvation. In association with sek-1, regulates germline cell apoptosis in response to oxidative, osmotic and heat shock stresses. Involved in resistance to pathogenic bacteria infection. Involved in axon regeneration after injury. The polypeptide is Dual specificity mitogen-activated protein kinase kinase mek-1 (Caenorhabditis elegans).